The sequence spans 839 residues: Eukaryotic translation initiation factor 3 subunit C (839 aa).

The interval 1-93 is disordered; the sequence is MSRFFVAGYN…DSDSEDEGRR (93 aa). 2 stretches are compositionally biased toward acidic residues: residues 14 to 27 and 34 to 58; these read SSEE…DEEL and GEQE…SDSD. One can recognise a PCI domain in the interval 585 to 759; it reads FHQHINLELL…AFIQFASTEP (175 aa). A disordered region spans residues 783–839; it reads EKTSSNGYGKKQPQQQQQQQQQQQQQQQQQKDLLQEDNSRFRYANVNTNNDEFQTTA. Over residues 794–812 the composition is skewed to low complexity; sequence QPQQQQQQQQQQQQQQQQQ. Over residues 827–839 the composition is skewed to polar residues; the sequence is NVNTNNDEFQTTA.

The protein belongs to the eIF-3 subunit C family. Component of the eukaryotic translation initiation factor 3 (eIF-3) complex.

It is found in the cytoplasm. Its function is as follows. Component of the eukaryotic translation initiation factor 3 (eIF-3) complex, which is involved in protein synthesis of a specialized repertoire of mRNAs and, together with other initiation factors, stimulates binding of mRNA and methionyl-tRNAi to the 40S ribosome. The eIF-3 complex specifically targets and initiates translation of a subset of mRNAs involved in cell proliferation. The sequence is that of Eukaryotic translation initiation factor 3 subunit C from Scheffersomyces stipitis (strain ATCC 58785 / CBS 6054 / NBRC 10063 / NRRL Y-11545) (Yeast).